The primary structure comprises 326 residues: MREVLLSECIDLLYESHFVISKPFGRSCFDLIAKKADLRFLIKILKNIDSLSTEQSEELLNIAKMLQAVPIIIGTRTRNSIMEEGAVYERYGIKAVTFNTFRDQLSGEPPVVYANRGGFFVNIDGAVLRETREKLKISVGELAEISRVSRKTIYKYEQNEANPSAEVAIKIEEYLDVPLIKGINIVDYMEGLKSQKSREEAFEKILKEGEDFKIRVIDILGDMGFNLLETTKAPFDAVAEESKSEDAENQNIIFTNIQETENEEIRRKAMIVDEISKMLNSHSLLVLEKKTNENKQITSMSISELEKIGDTVDLLEFIEKKKKSTK.

Positions 128 to 183 constitute an HTH cro/C1-type domain; that stretch reads LRETREKLKISVGELAEISRVSRKTIYKYEQNEANPSAEVAIKIEEYLDVPLIKGI. The segment at residues 139-158 is a DNA-binding region (H-T-H motif); that stretch reads VGELAEISRVSRKTIYKYEQ.

The protein is Putative HTH-type transcriptional regulatory protein MmarC7_1702 of Methanococcus maripaludis (strain C7 / ATCC BAA-1331).